The chain runs to 719 residues: Alpha-galactosidase 2 (719 aa).

The active-site Nucleophile is the D472. The Proton donor role is filled by D542.

This sequence belongs to the glycosyl hydrolase 36 family.

It carries out the reaction Hydrolysis of terminal, non-reducing alpha-D-galactose residues in alpha-D-galactosides, including galactose oligosaccharides, galactomannans and galactolipids.. Functionally, alpha-galactosidase associated with the sucrase operon. The protein is Alpha-galactosidase 2 (agaS) of Pediococcus pentosaceus.